Reading from the N-terminus, the 750-residue chain is Methylmalonyl-CoA mutase, mitochondrial (750 aa).

The N-terminal 32 residues, Met1–Phe32, are a transit peptide targeting the mitochondrion. Gln50 contributes to the malonyl-CoA binding site. Lys89 is subject to N6-acetyllysine. Malonyl-CoA-binding positions include Tyr96 to Met99 and Thr106 to Tyr110. Lys212 is subject to N6-acetyllysine. Residues Thr216–Gln218, Arg228, Lys255, His265, and Arg304–Ser306 contribute to the malonyl-CoA site. Lys335 bears the N6-acetyllysine mark. N6-succinyllysine is present on Lys343. Ser481 carries the post-translational modification Phosphoserine. Lys595 carries the post-translational modification N6-succinyllysine. Lys602 is modified (N6-acetyllysine). The 133-residue stretch at Arg614–Lys746 folds into the B12-binding domain. His627 lines the adenosylcob(III)alamin pocket.

The protein belongs to the methylmalonyl-CoA mutase family. As to quaternary structure, homodimer. Interacts (the apoenzyme form) with MMAA; the interaction is GTP dependent. It depends on adenosylcob(III)alamin as a cofactor.

It is found in the mitochondrion matrix. The protein localises to the mitochondrion. Its subcellular location is the cytoplasm. The catalysed reaction is (R)-methylmalonyl-CoA = succinyl-CoA. With respect to regulation, inhibited by itaconyl-CoA, a metabolite that inactivates the coenzyme B12 cofactor. Its function is as follows. Catalyzes the reversible isomerization of methylmalonyl-CoA (MMCoA) (generated from branched-chain amino acid metabolism and degradation of dietary odd chain fatty acids and cholesterol) to succinyl-CoA (3-carboxypropionyl-CoA), a key intermediate of the tricarboxylic acid cycle. The protein is Methylmalonyl-CoA mutase, mitochondrial (MMUT) of Macaca fascicularis (Crab-eating macaque).